The sequence spans 310 residues: tRNA uridine(34) hydroxylase (310 aa).

Residues 127-225 (KNQNTIVIDT…YLDEISKEEN (99 aa)) enclose the Rhodanese domain. Cys-185 (cysteine persulfide intermediate) is an active-site residue.

It belongs to the TrhO family.

It carries out the reaction uridine(34) in tRNA + AH2 + O2 = 5-hydroxyuridine(34) in tRNA + A + H2O. Functionally, catalyzes oxygen-dependent 5-hydroxyuridine (ho5U) modification at position 34 in tRNAs. This Prochlorococcus marinus (strain MIT 9215) protein is tRNA uridine(34) hydroxylase.